The chain runs to 37 residues: Photosystem II reaction center protein L (37 aa).

Topologically, residues Met1–Asn13 are cytoplasmic. The helical transmembrane segment at Arg14–Phe35 threads the bilayer. Residues Phe36–Asn37 are Lumenal-facing.

In terms of assembly, PSII is composed of 1 copy each of membrane proteins PsbA, PsbB, PsbC, PsbD, PsbE, PsbF, PsbH, PsbI, PsbJ, PsbK, PsbL, PsbM, PsbT, PsbX, PsbY, PsbZ, Psb30/Ycf12, peripheral proteins PsbO, CyanoQ (PsbQ), PsbU, PsbV and a large number of cofactors. It forms dimeric complexes. Part of a photosystem II (PSII) assembly intermediate complex PSII-I; crystallized from a strain deleted of psbJ, it forms monomeric PSII before addition of the oxygen evolving complex. PSII-I includes 3 assembly factors not found in mature PSII (Psb27, Psb28 and Psb34). PSII binds multiple chlorophylls, carotenoids and specific lipids. serves as cofactor.

The protein resides in the cellular thylakoid membrane. In terms of biological role, one of the components of the core complex of photosystem II (PSII). PSII is a light-driven water:plastoquinone oxidoreductase that uses light energy to abstract electrons from H(2)O, generating O(2) and a proton gradient subsequently used for ATP formation. It consists of a core antenna complex that captures photons, and an electron transfer chain that converts photonic excitation into a charge separation. This subunit is found at the monomer-monomer interface and is required for correct PSII assembly and/or dimerization. This subunit may make specific contacts with lipid(s). In Thermosynechococcus vestitus (strain NIES-2133 / IAM M-273 / BP-1), this protein is Photosystem II reaction center protein L.